We begin with the raw amino-acid sequence, 483 residues long: Regulatory protein ViaA (483 aa).

The protein belongs to the ViaA family. As to quaternary structure, homodimer. Interacts with RavA.

Its subcellular location is the cytoplasm. In terms of biological role, component of the RavA-ViaA chaperone complex, which may act on the membrane to optimize the function of some of the respiratory chains. ViaA stimulates the ATPase activity of RavA. The sequence is that of Regulatory protein ViaA from Escherichia coli O9:H4 (strain HS).